The primary structure comprises 243 residues: Venom nerve growth factor 1 (243 aa).

Positions 1–18 (MSMLCYTLIIAFLIGIWA) are cleaved as a signal peptide. Residues 19-125 (APKSEDNVPL…TLNRNIRAKR (107 aa)) constitute a propeptide that is removed on maturation. Residues 47-66 (GLKTSRNTDQRHPAPKKAED) are compositionally biased toward basic and acidic residues. The tract at residues 47 to 69 (GLKTSRNTDQRHPAPKKAEDQEL) is disordered. Disulfide bonds link Cys139–Cys204, Cys182–Cys232, and Cys192–Cys234. Asn148 carries an N-linked (GlcNAc...) asparagine glycan.

Belongs to the NGF-beta family. In terms of assembly, homodimer; non-covalently linked. Expressed by the venom gland.

It is found in the secreted. Nerve growth factor is important for the development and maintenance of the sympathetic and sensory nervous systems. It stimulates division and differentiation of sympathetic and embryonic sensory neurons as well as basal forebrain cholinergic neurons in the brain. Its relevance in the snake venom is not clear. However, it has been shown to inhibit metalloproteinase-dependent proteolysis of platelet glycoprotein Ib alpha, suggesting a metalloproteinase inhibition to prevent metalloprotease autodigestion and/or protection against prey proteases. Binds a lipid between the two protein chains in the homodimer. The lipid-bound form promotes histamine relase from mouse mast cells, contrary to the lipid-free form. This is Venom nerve growth factor 1 from Pseudonaja textilis (Eastern brown snake).